The chain runs to 303 residues: Terpene synthase (303 aa).

Mg(2+) contacts are provided by Asp69 and Asp73. The DDXXD motif signature appears at 69-73 (DDIQD).

The protein belongs to the FPP/GGPP synthase family. Mg(2+) serves as cofactor.

The enzyme catalyses (2E)-geranyl diphosphate + H2O = (2E)-geraniol + diphosphate. Terpene synthase that is able to convert geraniol diphosphate to geraniol in tea leaves. The protein is Terpene synthase of Matsumurasca onukii (Tea green leafhopper).